The chain runs to 831 residues: Leucine--tRNA ligase (831 aa).

Residues Pro-35–His-45 carry the 'HIGH' region motif. Positions Lys-600–Ser-604 match the 'KMSKS' region motif. Position 603 (Lys-603) interacts with ATP.

It belongs to the class-I aminoacyl-tRNA synthetase family.

It localises to the cytoplasm. The enzyme catalyses tRNA(Leu) + L-leucine + ATP = L-leucyl-tRNA(Leu) + AMP + diphosphate. The sequence is that of Leucine--tRNA ligase from Rickettsia bellii (strain RML369-C).